The chain runs to 314 residues: Glycerol-3-phosphate dehydrogenase [NAD(P)+] (314 aa).

NADPH-binding residues include serine 14, phenylalanine 15, arginine 35, and lysine 108. Sn-glycerol 3-phosphate contacts are provided by lysine 108 and glycine 136. NADPH is bound at residue alanine 140. Residues lysine 191, aspartate 247, serine 257, arginine 258, and asparagine 259 each coordinate sn-glycerol 3-phosphate. Lysine 191 (proton acceptor) is an active-site residue. An NADPH-binding site is contributed by arginine 258. The NADPH site is built by leucine 282 and glutamate 284.

Belongs to the NAD-dependent glycerol-3-phosphate dehydrogenase family.

The protein resides in the cytoplasm. It catalyses the reaction sn-glycerol 3-phosphate + NAD(+) = dihydroxyacetone phosphate + NADH + H(+). It carries out the reaction sn-glycerol 3-phosphate + NADP(+) = dihydroxyacetone phosphate + NADPH + H(+). It functions in the pathway membrane lipid metabolism; glycerophospholipid metabolism. In terms of biological role, catalyzes the reduction of the glycolytic intermediate dihydroxyacetone phosphate (DHAP) to sn-glycerol 3-phosphate (G3P), the key precursor for phospholipid synthesis. This Rickettsia bellii (strain OSU 85-389) protein is Glycerol-3-phosphate dehydrogenase [NAD(P)+].